Here is a 669-residue protein sequence, read N- to C-terminus: Trifunctional UDP-glucose 4,6-dehydratase/UDP-4-keto-6-deoxy-D-glucose 3,5-epimerase/UDP-4-keto-L-rhamnose-reductase RHM1 (669 aa).

Residue 13 to 19 (GAAGFIA) participates in NAD(+) binding. Threonine 132 contributes to the substrate binding site. Catalysis depends on aspartate 133, which acts as the Proton donor. Catalysis depends on proton acceptor residues glutamate 134 and tyrosine 159. NADP(+) is bound at residue 391-397 (GKTGWIG).

It in the N-terminal section; belongs to the NAD(P)-dependent epimerase/dehydratase family. dTDP-glucose dehydratase subfamily. In the C-terminal section; belongs to the dTDP-4-dehydrorhamnose reductase family. It depends on NAD(+) as a cofactor. The cofactor is NADP(+). As to expression, expressed in roots, stems, leaves, seedlings, inflorescence tips, and siliques. Detected in the adaxial side of cotyledons, in the emerging leaves and in trichomes. Also detected in the root tip, more precisely in the epidermal cells in the meristematic and elongation zone.

It localises to the cytoplasm. The protein localises to the cytosol. The catalysed reaction is UDP-alpha-D-glucose = UDP-4-dehydro-6-deoxy-alpha-D-glucose + H2O. The protein operates within carbohydrate biosynthesis. In terms of biological role, trifunctional enzyme involved in UDP-beta-L-rhamnose biosynthesis, a precursor of the primary cell wall components rhamnogalacturonan I (RG-I) and rhamnogalacturonan II (RG-II). Plays a major role in supplying UDP-rhamnose for flavonol biosynthesis. Catalyzes the dehydration of UDP-glucose to form UDP-4-dehydro-6-deoxy-D-glucose followed by the epimerization of the C3' and C5' positions of UDP-4-dehydro-6-deoxy-D-glucose to form UDP-4-keto-beta-L-rhamnose and the reduction of UDP-4-keto-beta-L-rhamnose to yield UDP-beta-L-rhamnose. The protein is Trifunctional UDP-glucose 4,6-dehydratase/UDP-4-keto-6-deoxy-D-glucose 3,5-epimerase/UDP-4-keto-L-rhamnose-reductase RHM1 of Arabidopsis thaliana (Mouse-ear cress).